The sequence spans 245 residues: Epoxyqueuosine reductase QueH (245 aa).

[4Fe-4S] cluster is bound by residues cysteine 52, cysteine 53, cysteine 131, and cysteine 134. Cysteine 214 and cysteine 216 form a disulfide bridge.

This sequence belongs to the QueH family.

It catalyses the reaction epoxyqueuosine(34) in tRNA + AH2 = queuosine(34) in tRNA + A + H2O. It participates in tRNA modification; tRNA-queuosine biosynthesis. Functionally, catalyzes the conversion of epoxyqueuosine (oQ) to queuosine (Q), which is a hypermodified base found in the wobble positions of tRNA(Asp), tRNA(Asn), tRNA(His) and tRNA(Tyr). The sequence is that of Epoxyqueuosine reductase QueH from Haemophilus influenzae (strain ATCC 51907 / DSM 11121 / KW20 / Rd).